Reading from the N-terminus, the 218-residue chain is Small ribosomal subunit protein uS3c (218 aa).

The KH type-2 domain maps to 47–118 (VQNNIRISSG…KLNIAITRIS (72 aa)).

It belongs to the universal ribosomal protein uS3 family. Part of the 30S ribosomal subunit.

It localises to the plastid. The protein localises to the chloroplast. This is Small ribosomal subunit protein uS3c (rps3) from Draba nemorosa (Woodland whitlowgrass).